A 459-amino-acid polypeptide reads, in one-letter code: Bifunctional protein GlmU (459 aa).

The interval Met-1 to Arg-229 is pyrophosphorylase. Residues Leu-8 to Gly-11, Lys-22, Gln-72, and Gly-77 to Thr-78 each bind UDP-N-acetyl-alpha-D-glucosamine. Asp-102 contacts Mg(2+). 4 residues coordinate UDP-N-acetyl-alpha-D-glucosamine: Gly-139, Glu-154, Asn-169, and Asn-227. Asn-227 is a binding site for Mg(2+). Residues Val-230–Asn-250 are linker. The tract at residues Gly-251–Lys-459 is N-acetyltransferase. Arg-332 and Lys-350 together coordinate UDP-N-acetyl-alpha-D-glucosamine. His-362 acts as the Proton acceptor in catalysis. UDP-N-acetyl-alpha-D-glucosamine is bound by residues Tyr-365 and Asn-376. Residues Ala-379, Asn-385–Tyr-386, Ser-404, Ala-422, and Arg-439 each bind acetyl-CoA.

In the N-terminal section; belongs to the N-acetylglucosamine-1-phosphate uridyltransferase family. The protein in the C-terminal section; belongs to the transferase hexapeptide repeat family. In terms of assembly, homotrimer. Mg(2+) is required as a cofactor.

The protein localises to the cytoplasm. The catalysed reaction is alpha-D-glucosamine 1-phosphate + acetyl-CoA = N-acetyl-alpha-D-glucosamine 1-phosphate + CoA + H(+). The enzyme catalyses N-acetyl-alpha-D-glucosamine 1-phosphate + UTP + H(+) = UDP-N-acetyl-alpha-D-glucosamine + diphosphate. It participates in nucleotide-sugar biosynthesis; UDP-N-acetyl-alpha-D-glucosamine biosynthesis; N-acetyl-alpha-D-glucosamine 1-phosphate from alpha-D-glucosamine 6-phosphate (route II): step 2/2. The protein operates within nucleotide-sugar biosynthesis; UDP-N-acetyl-alpha-D-glucosamine biosynthesis; UDP-N-acetyl-alpha-D-glucosamine from N-acetyl-alpha-D-glucosamine 1-phosphate: step 1/1. It functions in the pathway bacterial outer membrane biogenesis; LPS lipid A biosynthesis. In terms of biological role, catalyzes the last two sequential reactions in the de novo biosynthetic pathway for UDP-N-acetylglucosamine (UDP-GlcNAc). The C-terminal domain catalyzes the transfer of acetyl group from acetyl coenzyme A to glucosamine-1-phosphate (GlcN-1-P) to produce N-acetylglucosamine-1-phosphate (GlcNAc-1-P), which is converted into UDP-GlcNAc by the transfer of uridine 5-monophosphate (from uridine 5-triphosphate), a reaction catalyzed by the N-terminal domain. This chain is Bifunctional protein GlmU, found in Streptococcus agalactiae serotype III (strain NEM316).